Here is a 310-residue protein sequence, read N- to C-terminus: Olfactory receptor 2A12 (310 aa).

Residues 1-24 are Extracellular-facing; sequence MESNQTWITEVILLGFQVDPALEL. An N-linked (GlcNAc...) asparagine glycan is attached at Asn-4. The helical transmembrane segment at 25–48 threads the bilayer; it reads FLFGFFLLFYSLTLMGNGIILGLI. Over 49-56 the chain is Cytoplasmic; it reads YLDSRLHT. Residues 57–78 traverse the membrane as a helical segment; the sequence is PMYVFLSHLAIVDMSYASSTVP. Residues 79–99 are Extracellular-facing; sequence KMLANLVMHKKVISFAPCILQ. Cys-96 and Cys-188 are disulfide-bonded. The chain crosses the membrane as a helical span at residues 100–119; that stretch reads TFLYLAFAITECLILVMMCY. Over 120-138 the chain is Cytoplasmic; sequence DRYVAICHPLQYTLIMNWR. Residues 139–157 traverse the membrane as a helical segment; that stretch reads VCTVLASTCWIFSFLLALV. Over 158–194 the chain is Extracellular; it reads HITLILRLPFCGPQKINHFFCQIMSVFKLACADTRLN. Residues 195–218 form a helical membrane-spanning segment; sequence QVVLFAGSAFILVGPLCLVLVSYL. Over 219 to 235 the chain is Cytoplasmic; it reads HILVAILRIQSGEGRRK. Residues 236 to 258 form a helical membrane-spanning segment; sequence AFSTCSSHLCVVGLFFGSAIVMY. The Extracellular portion of the chain corresponds to 259 to 271; sequence MAPKSSHSQERRK. A helical transmembrane segment spans residues 272–291; it reads ILSLFYSLFNPILNPLIYSL. Residues 292–310 lie on the Cytoplasmic side of the membrane; sequence RNAEVKGALKRVLWKQRSM.

The protein belongs to the G-protein coupled receptor 1 family.

The protein resides in the cell membrane. Functionally, odorant receptor. The polypeptide is Olfactory receptor 2A12 (OR2A12) (Homo sapiens (Human)).